The primary structure comprises 432 residues: CinA-like protein (432 aa).

This sequence belongs to the CinA family.

This chain is CinA-like protein, found in Colwellia psychrerythraea (strain 34H / ATCC BAA-681) (Vibrio psychroerythus).